The chain runs to 299 residues: Transcription elongation factor A protein 2 (299 aa).

One can recognise a TFIIS N-terminal domain in the interval 6-83; sequence EEIARIARRL…KSWKKLLDAS (78 aa). K58 is covalently cross-linked (Glycyl lysine isopeptide (Lys-Gly) (interchain with G-Cter in ubiquitin)). Phosphoserine occurs at positions 60 and 100. Residues 86-128 are disordered; the sequence is KARERGRGMPLPTSSRDASEAPDPSRKRPELPRAPSTPRITTF. The segment covering 102–116 has biased composition (basic and acidic residues); it reads DASEAPDPSRKRPEL. Positions 138–254 constitute a TFIIS central domain; the sequence is VRNKCREMLT…EHQMARTGGT (117 aa). The TFIIS-type zinc finger occupies 257–297; it reads DLFTCGKCRKKNCTYTQVQTRSSDEPMTTFVVCNECGNRWK. Zn(2+) contacts are provided by C261, C264, C289, and C292.

It belongs to the TFS-II family. As to quaternary structure, interacts with the basal transcription factor GTF2B. Interacts with REXO1. Testis and ovary specific.

It localises to the nucleus. Its function is as follows. Necessary for efficient RNA polymerase II transcription elongation past template-encoded arresting sites. The arresting sites in DNA have the property of trapping a certain fraction of elongating RNA polymerases that pass through, resulting in locked ternary complexes. Cleavage of the nascent transcript by S-II allows the resumption of elongation from the new 3'-terminus. The chain is Transcription elongation factor A protein 2 (TCEA2) from Homo sapiens (Human).